A 421-amino-acid chain; its full sequence is G/T mismatch-specific thymine DNA glycosylase (421 aa).

The disordered stretch occupies residues 45–108 (PNMATVTEQQ…STKSKEKQEK (64 aa)). Residues 77 to 89 (RAAEPQEPVEPKK) are compositionally biased toward basic and acidic residues. Basic residues predominate over residues 91–100 (ATSKKSGKST). Glycyl lysine isopeptide (Lys-Gly) (interchain with G-Cter in SUMO2) cross-links involve residues Lys114 and Lys259. A Glycyl lysine isopeptide (Lys-Gly) (interchain with G-Cter in SUMO); alternate cross-link involves residue Lys341. Lys341 participates in a covalent cross-link: Glycyl lysine isopeptide (Lys-Gly) (interchain with G-Cter in SUMO2); alternate.

Belongs to the uracil-DNA glycosylase (UDG) superfamily. TDG/mug family. Homodimer. Interacts with AICDA and GADD45A. In terms of processing, sumoylation on Lys-341 by either SUMO1 or SUMO2 induces dissociation of the product DNA.

It is found in the nucleus. The catalysed reaction is Hydrolyzes mismatched double-stranded DNA and polynucleotides, releasing free thymine.. DNA glycosylase that plays a key role in active DNA demethylation: specifically recognizes and binds 5-formylcytosine (5fC) and 5-carboxylcytosine (5caC) in the context of CpG sites and mediates their excision through base-excision repair (BER) to install an unmethylated cytosine. Cannot remove 5-hydroxymethylcytosine (5hmC). According to an alternative model, involved in DNA demethylation by mediating DNA glycolase activity toward 5-hydroxymethyluracil (5hmU) produced by deamination of 5hmC. Also involved in DNA repair by acting as a thymine-DNA glycosylase that mediates correction of G/T mispairs to G/C pairs: in the DNA of higher eukaryotes, hydrolytic deamination of 5-methylcytosine to thymine leads to the formation of G/T mismatches. Its role in the repair of canonical base damage is however minor compared to its role in DNA demethylation. It is capable of hydrolyzing the carbon-nitrogen bond between the sugar-phosphate backbone of the DNA and a mispaired thymine. In addition to the G/T, it can remove thymine also from C/T and T/T mispairs in the order G/T &gt;&gt; C/T &gt; T/T. It has no detectable activity on apyrimidinic sites and does not catalyze the removal of thymine from A/T pairs or from single-stranded DNA. It can also remove uracil and 5-bromouracil from mispairs with guanine. This is G/T mismatch-specific thymine DNA glycosylase (Tdg) from Mus musculus (Mouse).